We begin with the raw amino-acid sequence, 590 residues long: MRIHFFAFLIILSLVGCDGWQADVGKLVRKWNNQRTIDGNDIEKCIPDDGEQCTIQAGWNSTQVCEYVKCNDDNCEGGGYVLWTRYVECASSPAVRIILIITGVIYMLVLFIMVSSAADDFFSPSISSIVAHLRISESVAGVTFMAFGNGAPDVFGAIASVLSSPTPKADLALGELFGAGLFVTTMVLAVTIFTRPFKAEVFSSIRDIAFYLVALAFLAFCFVYYDHVEIWMPITFLGVYLIYVCTVILSQILHNRHKKDEEKVDEVKTVDTDSLEDDDDIYVSHGHHVLHAHEVMKMEAEIEAVEPLKTWSFRGVVHDFKEHLKPWPSMDEWDEMNIFQKVIAVLNTIPNFLFKLTIPHSEQPWSKPITLLQCLICPVFLLFCIQVCSISPFPNSPGLWMYGLILSVLLTAAVLFFTELHKEPPFYKSLISYAGFLMSIAWIYLISSEVVNVVTMLGVVSRVSHEVLGLTILAWSNSIGDLIADVSVAKQGYPRMAMAAAIGGQLFNLLIGFGLPFTIAKIQGKSISMIINPTYRLLMLFLAISLIFTLIAMFAQKYFLRRIHSYSLVFIYISFFVFIGLSLDDILVWN.

An N-terminal signal peptide occupies residues 1-19 (MRIHFFAFLIILSLVGCDG). A run of 11 helical transmembrane segments spans residues 97 to 117 (IILIITGVIYMLVLFIMVSSA), 139 to 159 (VAGVTFMAFGNGAPDVFGAIA), 173 to 193 (LGELFGAGLFVTTMVLAVTIF), 208 to 228 (IAFYLVALAFLAFCFVYYDHV), 230 to 250 (IWMPITFLGVYLIYVCTVILS), 368 to 388 (PITLLQCLICPVFLLFCIQVC), 397 to 417 (PGLWMYGLILSVLLTAAVLFF), 440 to 460 (IAWIYLISSEVVNVVTMLGVV), 499 to 519 (AAAIGGQLFNLLIGFGLPFTI), 535 to 555 (YRLLMLFLAISLIFTLIAMFA), and 568 to 588 (LVFIYISFFVFIGLSLDDILV).

Belongs to the Ca(2+):cation antiporter (CaCA) (TC 2.A.19) family.

It is found in the membrane. This chain is Putative sodium/calcium exchanger 6 (ncx-6), found in Caenorhabditis elegans.